A 500-amino-acid polypeptide reads, in one-letter code: Nitrate/nitrite transporter NrtP (500 aa).

The next 12 helical transmembrane spans lie at 19–39 (WFAFFLTFVCWFNFAPFATTI), 52–72 (TLGICNLALTIPARLIIGMLL), 79–99 (ITYSILLMFAVVPCLATALAQ), 109–129 (LLMGIVGSGFVVGIRMVAEWF), 147–167 (FGAFGAEFALPILAISTSFFS), 175–195 (LAIALVGIITAIYGVIYYNTV), 220–240 (SFWAMMISNFGLIFALGLLAW), 247–267 (IHFLTLSQMYLTWLVLAGLFA), 364–384 (WTMTIISVGIGVSYLMAHFIN), 389–409 (IPVAIAVTMFAAYFAQAGCGA), 425–445 (IAGNVGAYGNFGGVVYLTIFS), and 451–471 (TLFSTMGIAALICAFMCAFFL).

Belongs to the major facilitator superfamily. Nitrate/nitrite porter (TC 2.A.1.8) family.

The protein localises to the cell inner membrane. In terms of biological role, transport system for both nitrate and nitrite, with much higher affinity for nitrate than for nitrite. The protein is Nitrate/nitrite transporter NrtP of Nostoc punctiforme (strain ATCC 29133 / PCC 73102).